Reading from the N-terminus, the 162-residue chain is NADH-quinone oxidoreductase subunit I (162 aa).

2 consecutive 4Fe-4S ferredoxin-type domains span residues 54–83 (RRYENGEERCIACKLCEAVCPALAITIESE) and 93–122 (TRYDIDLTKCIFCGFCEESCPVDSIVETQI). The [4Fe-4S] cluster site is built by Cys63, Cys66, Cys69, Cys73, Cys102, Cys105, Cys108, and Cys112.

It belongs to the complex I 23 kDa subunit family. As to quaternary structure, NDH-1 is composed of 14 different subunits. Subunits NuoA, H, J, K, L, M, N constitute the membrane sector of the complex. The cofactor is [4Fe-4S] cluster.

The protein resides in the cell inner membrane. The catalysed reaction is a quinone + NADH + 5 H(+)(in) = a quinol + NAD(+) + 4 H(+)(out). NDH-1 shuttles electrons from NADH, via FMN and iron-sulfur (Fe-S) centers, to quinones in the respiratory chain. The immediate electron acceptor for the enzyme in this species is believed to be ubiquinone. Couples the redox reaction to proton translocation (for every two electrons transferred, four hydrogen ions are translocated across the cytoplasmic membrane), and thus conserves the redox energy in a proton gradient. This Burkholderia cenocepacia (strain HI2424) protein is NADH-quinone oxidoreductase subunit I.